Consider the following 376-residue polypeptide: Deoxyguanosinetriphosphate triphosphohydrolase-like protein (376 aa).

Residues 1–32 (MEPSFAPYAAHSSQTRGRVHREAPAAPRSEFQ) are disordered. The HD domain occupies 65 to 196 (RLTHSIEVAQ…ANLADEIAYN (132 aa)).

Belongs to the dGTPase family. Type 2 subfamily.

In Thiobacillus denitrificans (strain ATCC 25259 / T1), this protein is Deoxyguanosinetriphosphate triphosphohydrolase-like protein.